Consider the following 618-residue polypeptide: Citrolysin protein 1 (618 aa).

Its function is as follows. Bacterial hemolysins are exotoxins that attack blood cell membranes and cause cell rupture by mechanisms not clearly defined. This chain is Citrolysin protein 1, found in Citrobacter freundii.